The primary structure comprises 1261 residues: Apoptotic protease-activating factor 1 (1261 aa).

Positions 1-90 constitute a CARD domain; that stretch reads MEERARSRLL…GDLASLLHSD (90 aa). The NB-ARC domain occupies 106–417; that stretch reads VSPSVQAILS…LELEEVEDVL (312 aa). 154–161 contributes to the ATP binding site; it reads GMAGSGKS. WD repeat units follow at residues 615-654, 657-696, 700-743, 746-785, 798-836, 840-879, 882-921, 964-1003, 1006-1045, 1047-1088, 1091-1130, 1133-1172, and 1184-1223; these read PHQG…KLLE, AHEE…LIRE, EHEE…SQNT, GHME…EWKS, EIKA…LLLK, SRLS…KKAE, GHLS…TSSA, ELSS…ASVK, GHTK…CMVL, GHME…MLQD, CHEG…MLFL, GHKD…LLKI, and YHAG…QTFY.

In terms of assembly, monomer. Oligomerizes upon binding of cytochrome c and dATP.

The protein localises to the cytoplasm. Oligomeric Apaf-1 mediates the cytochrome c-dependent autocatalytic activation of pro-caspase-9 (Apaf-3), leading to the activation of caspase-3 and apoptosis. This activation requires ATP. This is Apoptotic protease-activating factor 1 (apaf1) from Danio rerio (Zebrafish).